Here is an 848-residue protein sequence, read N- to C-terminus: Adenylate cyclase (848 aa).

The tract at residues Met-1–Leu-535 is catalytic. The interval Lys-541–Ser-848 is regulatory. His-609 carries the post-translational modification Phosphohistidine; by CRR.

This sequence belongs to the adenylyl cyclase class-1 family.

It localises to the cytoplasm. The catalysed reaction is ATP = 3',5'-cyclic AMP + diphosphate. This is Adenylate cyclase (cyaA) from Escherichia coli O157:H7.